The chain runs to 455 residues: Chromosomal replication initiator protein DnaA (455 aa).

The segment at 1-73 (METSLETLWS…RDVVHEILGH (73 aa)) is domain I, interacts with DnaA modulators. The domain II stretch occupies residues 73–116 (HPVEIQIEIAQGDSNATISAPEVASPPPTASPVENTNTSQRQQA). A disordered region spans residues 92–116 (APEVASPPPTASPVENTNTSQRQQA). Over residues 104-116 (PVENTNTSQRQQA) the composition is skewed to polar residues. The tract at residues 117-333 (SLNPKYVFSR…GALIRAVAYI (217 aa)) is domain III, AAA+ region. ATP-binding residues include glycine 161, glycine 163, lysine 164, and threonine 165. Positions 334–455 (SISGLPMNVE…GDRIKLANQP (122 aa)) are domain IV, binds dsDNA.

It belongs to the DnaA family. In terms of assembly, oligomerizes as a right-handed, spiral filament on DNA at oriC.

The protein localises to the cytoplasm. Its function is as follows. Plays an essential role in the initiation and regulation of chromosomal replication. ATP-DnaA binds to the origin of replication (oriC) to initiate formation of the DNA replication initiation complex once per cell cycle. Binds the DnaA box (a 9 base pair repeat at the origin) and separates the double-stranded (ds)DNA. Forms a right-handed helical filament on oriC DNA; dsDNA binds to the exterior of the filament while single-stranded (ss)DNA is stabiized in the filament's interior. The ATP-DnaA-oriC complex binds and stabilizes one strand of the AT-rich DNA unwinding element (DUE), permitting loading of DNA polymerase. After initiation quickly degrades to an ADP-DnaA complex that is not apt for DNA replication. Binds acidic phospholipids. The protein is Chromosomal replication initiator protein DnaA of Acaryochloris marina (strain MBIC 11017).